Here is a 95-residue protein sequence, read N- to C-terminus: Co-chaperonin GroES (95 aa).

Belongs to the GroES chaperonin family. Heptamer of 7 subunits arranged in a ring. Interacts with the chaperonin GroEL.

The protein localises to the cytoplasm. In terms of biological role, together with the chaperonin GroEL, plays an essential role in assisting protein folding. The GroEL-GroES system forms a nano-cage that allows encapsulation of the non-native substrate proteins and provides a physical environment optimized to promote and accelerate protein folding. GroES binds to the apical surface of the GroEL ring, thereby capping the opening of the GroEL channel. The chain is Co-chaperonin GroES from Deinococcus radiodurans (strain ATCC 13939 / DSM 20539 / JCM 16871 / CCUG 27074 / LMG 4051 / NBRC 15346 / NCIMB 9279 / VKM B-1422 / R1).